Reading from the N-terminus, the 290-residue chain is Glutamate 5-kinase (290 aa).

K21 serves as a coordination point for ATP. 3 residues coordinate substrate: S60, D151, and N163. Residue 217–223 (TGGMFTK) coordinates ATP.

The protein belongs to the glutamate 5-kinase family.

It localises to the cytoplasm. It catalyses the reaction L-glutamate + ATP = L-glutamyl 5-phosphate + ADP. Its pathway is amino-acid biosynthesis; L-proline biosynthesis; L-glutamate 5-semialdehyde from L-glutamate: step 1/2. In terms of biological role, catalyzes the transfer of a phosphate group to glutamate to form L-glutamate 5-phosphate. The chain is Glutamate 5-kinase from Leptospira interrogans serogroup Icterohaemorrhagiae serovar copenhageni (strain Fiocruz L1-130).